Consider the following 456-residue polypeptide: Phosphomethylpyrimidine synthase (456 aa).

Substrate-binding positions include N80, M109, Y139, H175, 195–197 (SRG), 236–239 (DSLR), and E275. Zn(2+) is bound at residue H279. Y302 contacts substrate. H343 is a binding site for Zn(2+). Positions 423, 426, and 431 each coordinate [4Fe-4S] cluster.

It belongs to the ThiC family. It depends on [4Fe-4S] cluster as a cofactor.

The enzyme catalyses 5-amino-1-(5-phospho-beta-D-ribosyl)imidazole + S-adenosyl-L-methionine = 4-amino-2-methyl-5-(phosphooxymethyl)pyrimidine + CO + 5'-deoxyadenosine + formate + L-methionine + 3 H(+). It functions in the pathway cofactor biosynthesis; thiamine diphosphate biosynthesis. In terms of biological role, catalyzes the synthesis of the hydroxymethylpyrimidine phosphate (HMP-P) moiety of thiamine from aminoimidazole ribotide (AIR) in a radical S-adenosyl-L-methionine (SAM)-dependent reaction. The polypeptide is Phosphomethylpyrimidine synthase (Prochlorococcus marinus (strain AS9601)).